The primary structure comprises 277 residues: UPF0496 protein At3g48650 (277 aa).

The next 2 membrane-spanning stretches (helical) occupy residues 124 to 144 (YIFF…LGAV) and 145 to 165 (SLVV…APLW).

The protein belongs to the UPF0496 family.

It is found in the membrane. This is UPF0496 protein At3g48650 from Arabidopsis thaliana (Mouse-ear cress).